The following is a 303-amino-acid chain: Protoheme IX farnesyltransferase (303 aa).

The next 9 membrane-spanning stretches (helical) occupy residues 17–37 (GVVM…TEPA), 42–62 (LATF…SAAI), 91–111 (AAIT…YFLV), 114–134 (LTAW…TLYL), 142–162 (IVIG…AVTG), 168–188 (AWLL…ALAI), 208–228 (IPFT…CTLL), 231–251 (LTGM…LVFL), and 270–290 (FGYS…DHYL).

The protein belongs to the UbiA prenyltransferase family. Protoheme IX farnesyltransferase subfamily.

The protein localises to the cell inner membrane. It catalyses the reaction heme b + (2E,6E)-farnesyl diphosphate + H2O = Fe(II)-heme o + diphosphate. It participates in porphyrin-containing compound metabolism; heme O biosynthesis; heme O from protoheme: step 1/1. Its function is as follows. Converts heme B (protoheme IX) to heme O by substitution of the vinyl group on carbon 2 of heme B porphyrin ring with a hydroxyethyl farnesyl side group. This Alcanivorax borkumensis (strain ATCC 700651 / DSM 11573 / NCIMB 13689 / SK2) protein is Protoheme IX farnesyltransferase.